A 345-amino-acid chain; its full sequence is Dihydroorotase (345 aa).

The Zn(2+) site is built by His-13 and His-15. Substrate contacts are provided by residues 15 to 17 (HLR) and Asn-41. Zn(2+) is bound by residues Lys-99, His-136, and His-174. Residue Lys-99 is modified to N6-carboxylysine. His-136 contacts substrate. Leu-219 serves as a coordination point for substrate. Residue Asp-247 participates in Zn(2+) binding. Asp-247 is an active-site residue. Residues His-251 and Ala-263 each coordinate substrate.

It belongs to the metallo-dependent hydrolases superfamily. DHOase family. Class II DHOase subfamily. Homodimer. The cofactor is Zn(2+).

It carries out the reaction (S)-dihydroorotate + H2O = N-carbamoyl-L-aspartate + H(+). The protein operates within pyrimidine metabolism; UMP biosynthesis via de novo pathway; (S)-dihydroorotate from bicarbonate: step 3/3. Catalyzes the reversible cyclization of carbamoyl aspartate to dihydroorotate. This Hahella chejuensis (strain KCTC 2396) protein is Dihydroorotase.